Consider the following 468-residue polypeptide: Nuclear pore complex protein Nup50 (468 aa).

A compositionally biased stretch (basic and acidic residues) spans 1–16; sequence MAKRNAEKELTDRNWD. The interval 1–26 is disordered; sequence MAKRNAEKELTDRNWDQEDEAEEVGT. At Ala-2 the chain carries N-acetylalanine. Lys-8 is modified (N6-acetyllysine). Ser-52 is subject to Phosphoserine. Repeat 1 spans residues 76-77; sequence FG. The tract at residues 76–304 is 5 X 2 AA repeats of F-G; it reads FGSGAGGKPL…FSPGNSSLFG (229 aa). Lys-83 carries the post-translational modification N6-acetyllysine. Residues 113–114 form repeat 2; sequence FG. Disordered stretches follow at residues 122 to 148 and 201 to 224; these read TTLV…LASS and HGNS…SPSL. An N6-acetyllysine modification is found at Lys-127. Positions 137-148 are enriched in low complexity; the sequence is SQQPSSSGLASS. The interval 144-206 is binding to CDKN1B; it reads GLASSKACVG…IEQQHGNSGR (63 aa). Phosphoserine occurs at positions 208 and 221. The stretch at 225 to 226 is repeat 3; the sequence is FG. Ser-234 carries the phosphoserine modification. Positions 238–269 are disordered; that stretch reads FHGNKTEDTPDKKMEVASEKKTDPSSLGATSA. Positions 241–260 are enriched in basic and acidic residues; sequence NKTEDTPDKKMEVASEKKTD. A phosphothreonine mark is found at Thr-246 and Thr-259. Residue Ser-270 is modified to Phosphoserine. Repeat 4 spans residues 273–274; that stretch reads FG. Ser-296 carries the post-translational modification Phosphoserine. Repeat 5 spans residues 303-304; sequence FG. A compositionally biased stretch (polar residues) spans 304-317; sequence GKDTTQSKPVSSPF. The interval 304-345 is disordered; the sequence is GKDTTQSKPVSSPFPTKPLEGQAEGDSGECKGGDEEENDEPP. The 134-residue stretch at 335-468 folds into the RanBD1 domain; sequence GGDEEENDEP…HKILLEKKDA (134 aa). A Glycyl lysine isopeptide (Lys-Gly) (interchain with G-Cter in SUMO2) cross-link involves residue Lys-353. Residue Lys-450 is modified to N6-acetyllysine.

In terms of assembly, interacts with Importin alpha-2, Importin beta, Importin beta-2, NUP153, Ran binding protein 7, CDKN1B and itself. Does not interact with TPR. Ubiquitous. Highest levels in testis, peripheral blood leukocytes and fetal liver.

The protein localises to the nucleus. The protein resides in the nuclear pore complex. It localises to the nucleus membrane. Component of the nuclear pore complex that has a direct role in nuclear protein import. Actively displaces NLSs from importin-alpha, and facilitates disassembly of the importin-alpha:beta-cargo complex and importin recycling. Interacts with regulatory proteins of cell cycle progression including CDKN1B. This interaction is required for correct intracellular transport and degradation of CDKN1B. In Homo sapiens (Human), this protein is Nuclear pore complex protein Nup50 (NUP50).